A 367-amino-acid chain; its full sequence is D-alanine--D-alanine ligase (367 aa).

The ATP-grasp domain occupies 150-357 (KKLLTAAGLP…YPTLLATMVE (208 aa)). 178–233 (RERLGLPVFVKPSRGGSSIGVSRVTAWDALPAAIELARRHDPKVIVEAAIPGRELE) contacts ATP. Residues Asp-312, Glu-324, and Asn-326 each coordinate Mg(2+).

The protein belongs to the D-alanine--D-alanine ligase family. The cofactor is Mg(2+). Mn(2+) serves as cofactor.

Its subcellular location is the cytoplasm. It carries out the reaction 2 D-alanine + ATP = D-alanyl-D-alanine + ADP + phosphate + H(+). The protein operates within cell wall biogenesis; peptidoglycan biosynthesis. Functionally, cell wall formation. The chain is D-alanine--D-alanine ligase from Mycolicibacterium vanbaalenii (strain DSM 7251 / JCM 13017 / BCRC 16820 / KCTC 9966 / NRRL B-24157 / PYR-1) (Mycobacterium vanbaalenii).